The chain runs to 578 residues: Membrane protein insertase YidC (578 aa).

Residues 7–27 (FLAIAISLGILLGFQGLYRHF) form a helical membrane-spanning segment. A disordered region spans residues 35-70 (ARTATNAGQGKPNNTLGAVPTDATASQSPPPKEGAR). A compositionally biased stretch (polar residues) spans 37-50 (TATNAGQGKPNNTL). Helical transmembrane passes span 362-382 (LVGN…AAFY), 436-456 (LPML…FVTI), 491-511 (HISP…TMYL), and 530-550 (FMPI…VIYW).

This sequence belongs to the OXA1/ALB3/YidC family. Type 1 subfamily. In terms of assembly, interacts with the Sec translocase complex via SecD. Specifically interacts with transmembrane segments of nascent integral membrane proteins during membrane integration.

Its subcellular location is the cell inner membrane. Required for the insertion and/or proper folding and/or complex formation of integral membrane proteins into the membrane. Involved in integration of membrane proteins that insert both dependently and independently of the Sec translocase complex, as well as at least some lipoproteins. Aids folding of multispanning membrane proteins. This chain is Membrane protein insertase YidC, found in Granulibacter bethesdensis (strain ATCC BAA-1260 / CGDNIH1).